The primary structure comprises 612 residues: Bile salt-activated lipase (612 aa).

An N-terminal signal peptide occupies residues 1–20 (MGRLEVLFLGLTCCLAAACA). Cysteine 84 and cysteine 100 form a disulfide bridge. Residue asparagine 207 is glycosylated (N-linked (GlcNAc...) asparagine). Residue serine 214 is the Acyl-ester intermediate of the active site. An intrachain disulfide couples cysteine 266 to cysteine 277. Catalysis depends on charge relay system residues aspartate 340 and histidine 455. Residues 553–612 (VGDHTPPEDDSEAAPVPPTDDSQGGPVPPTDDSQTTPVPPTDNSQAGDSVEAQMPGPIGF) form a disordered region. 4 consecutive repeat copies span residues 556-566 (HTPPEDDSEAA), 567-577 (PVPPTDDSQGG), 578-588 (PVPPTDDSQTT), and 589-599 (PVPPTDNSQAG). The 4 X 11 AA tandem repeats, O-glycosylated region stretch occupies residues 556–599 (HTPPEDDSEAAPVPPTDDSQGGPVPPTDDSQTTPVPPTDNSQAG). The segment covering 583 to 599 (DDSQTTPVPPTDNSQAG) has biased composition (polar residues).

It belongs to the type-B carboxylesterase/lipase family. Interacts with CLC. As to expression, synthesized primarily in the pancreas and then transported to the intestine.

It localises to the secreted. The catalysed reaction is a triacylglycerol + H2O = a diacylglycerol + a fatty acid + H(+). It catalyses the reaction 1,2,3-tri-(9Z-octadecenoyl)-glycerol + H2O = di-(9Z)-octadecenoylglycerol + (9Z)-octadecenoate + H(+). It carries out the reaction 1,2,3-trioctanoylglycerol + H2O = dioctanoylglycerol + octanoate + H(+). The enzyme catalyses a sterol ester + H2O = a sterol + a fatty acid + H(+). The catalysed reaction is cholesteryl (9Z-octadecenoate) + H2O = cholesterol + (9Z)-octadecenoate + H(+). It catalyses the reaction an acetyl ester + H2O = an aliphatic alcohol + acetate + H(+). It carries out the reaction a butanoate ester + H2O = an aliphatic alcohol + butanoate + H(+). The enzyme catalyses 9-hexadecanoyloxy-octadecanoate + H2O = 9-hydroxy-octadecanoate + hexadecanoate + H(+). The catalysed reaction is 9-(9Z-octadecenoyloxy)-octadecanoate + H2O = 9-hydroxy-octadecanoate + (9Z)-octadecenoate + H(+). It catalyses the reaction 1-hexadecanoyl-sn-glycero-3-phosphocholine + H2O = sn-glycerol 3-phosphocholine + hexadecanoate + H(+). It carries out the reaction 12-hexadecanoyloxy-octadecanoate + H2O = 12-hydroxyoctadecanoate + hexadecanoate + H(+). The enzyme catalyses 12-(9Z-octadecenoyloxy)-octadecanoate + H2O = 12-hydroxyoctadecanoate + (9Z)-octadecenoate + H(+). The catalysed reaction is 13-(9Z-octadecenoyloxy)-octadecanoate + H2O = 13-hydroxy-octadecanoate + (9Z)-octadecenoate + H(+). It catalyses the reaction 9-(9Z-hexadecenoyloxy)-octadecanoate + H2O = (9Z)-hexadecenoate + 9-hydroxy-octadecanoate + H(+). It carries out the reaction 12-(9Z-hexadecenoyloxy)-octadecanoate + H2O = 12-hydroxyoctadecanoate + (9Z)-hexadecenoate + H(+). The enzyme catalyses 13-(9Z-hexadecenoyloxy)-octadecanoate + H2O = 13-hydroxy-octadecanoate + (9Z)-hexadecenoate + H(+). The catalysed reaction is 12-octadecanoyloxy-octadecanoate + H2O = 12-hydroxyoctadecanoate + octadecanoate + H(+). It catalyses the reaction 13-octadecanoyloxy-octadecanoate + H2O = 13-hydroxy-octadecanoate + octadecanoate + H(+). It carries out the reaction 5-(9Z-hexadecenoyloxy)-octadecanoate + H2O = 5-hydroxy-octadecanoate + (9Z)-hexadecenoate + H(+). The enzyme catalyses 9-octadecanoyloxy-octadecanoate + H2O = 9-hydroxy-octadecanoate + octadecanoate + H(+). With respect to regulation, activated by bile salts such as sodium taurocholate. In terms of biological role, catalyzes the hydrolysis of a wide range of substrates including cholesteryl esters, phospholipids, lysophospholipids, di- and tri-acylglycerols, and fatty acid esters of hydroxy fatty acids (FAHFA). Preferentially hydrolyzes FAHFAs with the ester bond further away from the carboxylate. Unsaturated FAHFAs are hydrolyzed more quickly than saturated FAHFAs. Has an essential role in the complete digestion of dietary lipids and their intestinal absorption, along with the absorption of fat-soluble vitamins. This chain is Bile salt-activated lipase (Cel), found in Rattus norvegicus (Rat).